An 82-amino-acid polypeptide reads, in one-letter code: MSPLIAAASVVAAGLAVGLASIGPGIGQGTAAGQAVGGIARQPEAEGKIRGTLLLSLAFMEALTIYGLVVALALLFANPFVS.

Helical transmembrane passes span 3-23 (PLIA…ASIG) and 57-77 (LAFM…LLFA).

Belongs to the ATPase C chain family. F-type ATPases have 2 components, F(1) - the catalytic core - and F(0) - the membrane proton channel. F(1) has five subunits: alpha(3), beta(3), gamma(1), delta(1), epsilon(1). F(0) has four main subunits: a(1), b(1), b'(1) and c(10-14). The alpha and beta chains form an alternating ring which encloses part of the gamma chain. F(1) is attached to F(0) by a central stalk formed by the gamma and epsilon chains, while a peripheral stalk is formed by the delta, b and b' chains.

Its subcellular location is the plastid. The protein resides in the chloroplast thylakoid membrane. F(1)F(0) ATP synthase produces ATP from ADP in the presence of a proton or sodium gradient. F-type ATPases consist of two structural domains, F(1) containing the extramembraneous catalytic core and F(0) containing the membrane proton channel, linked together by a central stalk and a peripheral stalk. During catalysis, ATP synthesis in the catalytic domain of F(1) is coupled via a rotary mechanism of the central stalk subunits to proton translocation. Functionally, key component of the F(0) channel; it plays a direct role in translocation across the membrane. A homomeric c-ring of between 10-14 subunits forms the central stalk rotor element with the F(1) delta and epsilon subunits. This Nephroselmis olivacea (Green alga) protein is ATP synthase subunit c, chloroplastic.